A 166-amino-acid chain; its full sequence is Regulatory protein RecX (166 aa).

It belongs to the RecX family.

The protein resides in the cytoplasm. In terms of biological role, modulates RecA activity. The protein is Regulatory protein RecX of Salmonella agona (strain SL483).